We begin with the raw amino-acid sequence, 147 residues long: Male-specific protein scotti (147 aa).

The segment at 55–93 (PQEPPLGVFPAQGGPNGPPRRRKKRSFYTMTKPTPPCQS) is disordered. Over residues 82-93 (YTMTKPTPPCQS) the composition is skewed to polar residues. N-linked (GlcNAc...) asparagine glycosylation occurs at Asn-128.

Belongs to the male-specific scotti family. In terms of tissue distribution, expressed in primary spermatocytes and round spermatids. Low expression is seen in very short elongating cysts, but were detected at high levels in a few longer spermatid cysts.

In terms of biological role, post-meiotically transcribed gene that has a role in late spermiogenesis; required for actin cone progression during spermatid individualization. The protein is Male-specific protein scotti of Drosophila melanogaster (Fruit fly).